A 316-amino-acid chain; its full sequence is Ribosomal RNA small subunit methyltransferase H (316 aa).

Residues 35–37 (AGH), aspartate 55, phenylalanine 84, aspartate 105, and glutamine 112 each bind S-adenosyl-L-methionine.

Belongs to the methyltransferase superfamily. RsmH family.

It is found in the cytoplasm. The enzyme catalyses cytidine(1402) in 16S rRNA + S-adenosyl-L-methionine = N(4)-methylcytidine(1402) in 16S rRNA + S-adenosyl-L-homocysteine + H(+). In terms of biological role, specifically methylates the N4 position of cytidine in position 1402 (C1402) of 16S rRNA. The polypeptide is Ribosomal RNA small subunit methyltransferase H (Streptococcus thermophilus (strain ATCC BAA-250 / LMG 18311)).